A 361-amino-acid polypeptide reads, in one-letter code: Cobalt-precorrin-5B C(1)-methyltransferase (361 aa).

Belongs to the CbiD family.

It carries out the reaction Co-precorrin-5B + S-adenosyl-L-methionine = Co-precorrin-6A + S-adenosyl-L-homocysteine. It functions in the pathway cofactor biosynthesis; adenosylcobalamin biosynthesis; cob(II)yrinate a,c-diamide from sirohydrochlorin (anaerobic route): step 6/10. Catalyzes the methylation of C-1 in cobalt-precorrin-5B to form cobalt-precorrin-6A. The protein is Cobalt-precorrin-5B C(1)-methyltransferase of Methylorubrum extorquens (strain CM4 / NCIMB 13688) (Methylobacterium extorquens).